Reading from the N-terminus, the 1379-residue chain is ATPase histone chaperone YTA7 (1379 aa).

Disordered regions lie at residues 1 to 39 (MARN…TTTR) and 54 to 243 (DFLE…NSRN). At Ala-2 the chain carries N-acetylalanine. Phosphoserine occurs at positions 11 and 17. Residues 61–78 (VMDKDETPVDVTSDEHHN) show a composition bias toward basic and acidic residues. Ser-94 carries the phosphoserine modification. Basic and acidic residues predominate over residues 97-110 (ENARTNEELTNERN). Composition is skewed to acidic residues over residues 119–152 (PEED…DEDS) and 170–184 (DPDD…DEEG). Over residues 192-207 (SSKRLKRANSRRTRSS) the composition is skewed to basic residues. Thr-212 carries the post-translational modification Phosphothreonine. Residues 218–228 (RALRSRTRHSR) are compositionally biased toward basic residues. Phosphothreonine is present on Thr-229. Residues Ser-241, Ser-259, and Ser-285 each carry the phosphoserine modification. A disordered region spans residues 302 to 330 (NPSPARRGRGGWNASQNSGPTRRLFPTGG). Phosphoserine is present on residues Ser-367, Ser-369, and Ser-370. A disordered region spans residues 375–396 (LPLGVTPKTKKENTQKKKKKKP). The AAA-ATPase; required for its chromatin boundary function stretch occupies residues 450-578 (VLFHGPPGTG…PALRRPGRFD (129 aa)). Position 454-461 (454-461 (GPPGTGKT)) interacts with ATP. At Ser-735 the chain carries Phosphoserine. In terms of domain architecture, Bromo spans 974-1101 (RLKNVLKIKL…ANAQMGIEEI (128 aa)). Phosphoserine is present on Ser-1142. 2 disordered regions span residues 1233–1274 (TCTS…ANTN) and 1291–1316 (LHET…GKKS). Residues 1244-1254 (ERARKEPKENE) show a composition bias toward basic and acidic residues. Residue Ser-1256 is modified to Phosphoserine. The segment covering 1256–1274 (SLQTQVTEENFSKIDANTN) has biased composition (polar residues). Residues 1293 to 1316 (ETVEKRERSPIPKEVVEPEQGKKS) are compositionally biased toward basic and acidic residues.

Belongs to the AAA ATPase family. As to quaternary structure, interacts with CSE4/CENP-A. Interacts with SCM3. Interacts with SPT16. Interacts with POB3. Interacts with the casein kinase II complex subunits CKA1, CKA2, CKB1 and CKB2. Interacts with RNA polymerase II. Interacts (via Bromo domain) with histone H3. Interacts (via Bromo domain) with histone H4. Post-translationally, phosphorylated by CDK1 and casein kinase II during S-phase, which leads to its eviction from histone gene promoters and promotes histone gene transcription.

The protein localises to the chromosome. The protein resides in the centromere. Its subcellular location is the nucleus. Functionally, functions as an ATP-dependent nucleosome disassembly factor that helps evict canonical histone H3 from the 5'-end of genes upon their induction. Also contributes to kinetochore assembly by cooperating with SCM3 to load the histone H3 variant CSE4/CENP-A at centromeres. Provides a chromatin boundary function at the 5'-end of genes that restricts access by RTT106 and thus prevents ectopic spreading of repressive chromatin into coding regions. Also prevents heterochromatin spreading downstream of the silent mating-type locus HMR, this function is independent of the tRNA boundary element. Contributes to appropriate cell cycle regulation of histone gene expression by recruiting RNA polymerase II to histone genes, and subsequent CDK1- and casein kinase II-dependent eviction from chromatin is required to promote transcriptional elongation. This is ATPase histone chaperone YTA7 from Saccharomyces cerevisiae (strain ATCC 204508 / S288c) (Baker's yeast).